The primary structure comprises 366 residues: 5-hydroxytryptamine receptor 1F (366 aa).

Residues 1-24 lie on the Extracellular side of the membrane; it reads MDFLNSSDQNLTSEELLNRMPSKI. Asn5 and Asn10 each carry an N-linked (GlcNAc...) asparagine glycan. Residues 25-49 form a helical membrane-spanning segment; the sequence is LVSLTLSGLALMTTTINSLVIAAII. The Cytoplasmic portion of the chain corresponds to 50–59; that stretch reads VTRKLHHPAN. Residues 60 to 81 form a helical membrane-spanning segment; that stretch reads YLICSLAVTDFLVAVLVMPFSI. At 82-96 the chain is on the extracellular side; the sequence is VYIVRESWIMGQVVC. Cys96 and Cys172 are disulfide-bonded. The helical transmembrane segment at 97–119 threads the bilayer; the sequence is DIWLSVDITCCTCSILHLSAIAL. Residues Asp103 and Cys107 each coordinate serotonin. The DRY motif; important for ligand-induced conformation changes signature appears at 120–122; the sequence is DRY. Residues 120-139 are Cytoplasmic-facing; sequence DRYRAITDAVEYARKRTPKH. Residues 140-159 form a helical membrane-spanning segment; sequence AGIMITIVWIISVFISMPPL. Residues 160-178 lie on the Extracellular side of the membrane; that stretch reads FWRHQGTSRDDECIIKHDH. The chain crosses the membrane as a helical span at residues 179 to 202; sequence IVSTIYSTFGAFYIPLALILILYY. Residues 203–291 lie on the Cytoplasmic side of the membrane; that stretch reads KIYRAAKTLY…KISGTRERKA (89 aa). A helical membrane pass occupies residues 292–315; it reads ATTLGLILGAFVICWLPFFVKELV. The Extracellular portion of the chain corresponds to 316 to 327; it reads VNVCDKCKISEE. The helical transmembrane segment at 328-350 threads the bilayer; sequence MSNFLAWLGYLNSLINPLIYTIF. The NPxxY motif; important for ligand-induced conformation changes and signaling signature appears at 343–347; sequence NPLIY. The Cytoplasmic portion of the chain corresponds to 351 to 366; the sequence is NEDFKKAFQKLVRCRC.

It belongs to the G-protein coupled receptor 1 family.

It localises to the cell membrane. In terms of biological role, G-protein coupled receptor for 5-hydroxytryptamine (serotonin). Also functions as a receptor for various alkaloids and psychoactive substances. Receptor for lasmiditan, a drug for the treatment of acute migraine. Ligand binding causes a conformation change that triggers signaling via guanine nucleotide-binding proteins (G proteins) and modulates the activity of downstream effectors, such as adenylate cyclase. HTR1F is coupled to G(i)/G(o) G alpha proteins and mediates inhibitory neurotransmission by inhibiting adenylate cyclase activity. The sequence is that of 5-hydroxytryptamine receptor 1F from Homo sapiens (Human).